The following is a 160-amino-acid chain: Endoplasmic reticulum transmembrane protein 2 (160 aa).

The Lumenal portion of the chain corresponds to 1-2 (MG). A helical transmembrane segment spans residues 3–23 (VYLAVLFSLLVIEMAILFILV). The Cytoplasmic portion of the chain corresponds to 24-45 (LPLPQRMRRWLYIRYSIISTNK). A helical membrane pass occupies residues 46–66 (KFRTYMVGIMIFVGLLFIDSW). The Lumenal segment spans residues 67 to 103 (KRSQIRVSTYRNQKNPYIINSVTPVDALASRAYNQRN). The chain crosses the membrane as a helical span at residues 104–124 (VYISGFIIYFYICILTVMSIL). Residues 125 to 160 (RRIVEWNDKMKAGDDILKEKLRRKQKYLEELQKKKF) lie on the Cytoplasmic side of the membrane. The short motif at 157-160 (KKKF) is the Di-lysine motif element.

It belongs to the BCAP29/BCAP31 family.

The protein resides in the endoplasmic reticulum membrane. Functionally, may play a role in anterograde transport of membrane proteins from the endoplasmic reticulum to the Golgi. The polypeptide is Endoplasmic reticulum transmembrane protein 2 (YET2) (Saccharomyces cerevisiae (strain ATCC 204508 / S288c) (Baker's yeast)).